The primary structure comprises 226 residues: Protein DVU_0532 (226 aa).

A run of 6 helical transmembrane segments spans residues 1-23, 46-57, 73-99, 112-131, 141-164, and 194-222; these read MYAF…GLLA, AIGLQGAVQSAL, FFTV…NVIL, MGVA…MIAL, ILTT…GFLA, and LSHI…TRGP.

Heme b serves as cofactor.

The protein resides in the cell membrane. Functionally, HMWC (high-molecular-weight cytochrome c), ORF2, ORF3, ORF4, ORF5 and ORF6 in the HMC operon form a transmembrane protein complex that allows electron flow from the periplasmic hydrogenase to the cytoplasmic enzymes that catalyze reduction of sulfates. The chain is Protein DVU_0532 from Nitratidesulfovibrio vulgaris (strain ATCC 29579 / DSM 644 / CCUG 34227 / NCIMB 8303 / VKM B-1760 / Hildenborough) (Desulfovibrio vulgaris).